The sequence spans 341 residues: UDP-N-acetylenolpyruvoylglucosamine reductase (341 aa).

Positions 12–182 (LSAYAKRLDI…ISVGLLLKKN (171 aa)) constitute an FAD-binding PCMH-type domain. The active site involves arginine 158. Residue serine 228 is the Proton donor of the active site. The active site involves glutamate 324.

This sequence belongs to the MurB family. FAD is required as a cofactor.

The protein resides in the cytoplasm. The catalysed reaction is UDP-N-acetyl-alpha-D-muramate + NADP(+) = UDP-N-acetyl-3-O-(1-carboxyvinyl)-alpha-D-glucosamine + NADPH + H(+). It participates in cell wall biogenesis; peptidoglycan biosynthesis. Its function is as follows. Cell wall formation. The chain is UDP-N-acetylenolpyruvoylglucosamine reductase from Photorhabdus laumondii subsp. laumondii (strain DSM 15139 / CIP 105565 / TT01) (Photorhabdus luminescens subsp. laumondii).